A 490-amino-acid polypeptide reads, in one-letter code: Velvet complex subunit 2 (490 aa).

2 disordered regions span residues 23 to 148 (LYHH…ESQQ) and 295 to 316 (YQTQPTYSQGSSAYPSNGTYGP). The segment covering 54–70 (PPSHHFQLHPGHGHHQQ) has biased composition (basic residues). Residues 112 to 131 (AAEHRDHPQHALDEPSRSHD) show a composition bias toward basic and acidic residues. Positions 164-474 (ATGRRYHLDV…AAQGIKIPIR (311 aa)) constitute a Velvet domain. Over residues 295-313 (YQTQPTYSQGSSAYPSNGT) the composition is skewed to polar residues.

Belongs to the velvet family. VelB subfamily. As to quaternary structure, component of the heterotrimeric velvet complex composed of LAE1, VEL1 and VEL2; VEL1 acting as a bridging protein between LAE1 and VEL2. Forms a heterodimeric complex with VOS1; the formation of the VEL2-VOS1 complex is light-dependent.

It localises to the nucleus. It is found in the cytoplasm. Component of the velvet transcription factor complex that controls sexual/asexual developmental ratio in response to light, promoting sexual development in the darkness while stimulating asexual sporulation under illumination. The velvet complex acts as a global regulator for secondary metabolite gene expression. Component of the VEL2-VOS1 heterodimeric complex that plays a dual role in activating genes associated with spore maturation and repressing certain development-associated genes. The VEL2-VOS1 complex binds DNA through the DNA-binding domain of VOS1 that recognizes an 11-nucleotide consensus sequence 5'-CTGGCCGCGGC-3' consisting of two motifs in the promoters of key developmental regulatory genes. Regulates expression of cellulase-encoding genes such as the cellobiohydrolase-encoding genes cbh1 and cbh2, the endo-beta-1,4-glucanase-encoding genes egl1 and egl2, and the beta-glucosidase-encoding gene bgl1. This is Velvet complex subunit 2 from Hypocrea jecorina (strain QM6a) (Trichoderma reesei).